Consider the following 210-residue polypeptide: MELQLALDLVNIPEAIELVKEVEQYIDVVEIGTPVVINEGLRAVKEIKEAFPQLKVLADLKIMDAGGYEIMKASEAGADIITVLGATDDATIKGAVEEAKKQKKKILVDMINVKDIESRAKEIDALGVDYICVHTGYDLQAEGKNSFEELTTIKNTVKNAKTAIAGGIKLDTLPEVIQQKPDLVIVGGGITSAADKAETASKMKQLIVQG.

This sequence belongs to the HPS/KGPDC family. HPS subfamily.

The catalysed reaction is D-ribulose 5-phosphate + formaldehyde = D-arabino-hex-3-ulose 6-phosphate. It functions in the pathway one-carbon metabolism; formaldehyde assimilation via RuMP pathway; D-fructose 6-phosphate from D-ribulose 5-phosphate and formaldehyde: step 1/2. Its function is as follows. Catalyzes the condensation of ribulose 5-phosphate with formaldehyde to form 3-hexulose 6-phosphate. Together with HxlB, may act as a formaldehyde detoxification system. The chain is 3-hexulose-6-phosphate synthase (hxlA) from Bacillus subtilis (strain 168).